Consider the following 232-residue polypeptide: Two-component response regulator ORR4 (232 aa).

Residues 11–147 (HVLAVDDSLI…DMKKLKSHLL (137 aa)) form the Response regulatory domain. D80 bears the 4-aspartylphosphate mark. Disordered stretches follow at residues 153–174 (LPMA…AASA) and 202–232 (AAAM…AVET). Residues 209-232 (VISSPDQRTKPRLSSTSSGLAVET) show a composition bias toward polar residues.

This sequence belongs to the ARR family. Type-A subfamily. In terms of processing, two-component system major event consists of a His-to-Asp phosphorelay between a sensor histidine kinase (HK) and a response regulator (RR). In plants, the His-to-Asp phosphorelay involves an additional intermediate named Histidine-containing phosphotransfer protein (HPt). This multistep phosphorelay consists of a His-Asp-His-Asp sequential transfer of a phosphate group between first a His and an Asp of the HK protein, followed by the transfer to a conserved His of the HPt protein and finally the transfer to an Asp in the receiver domain of the RR protein. As to expression, expressed in mature leaves and flowers, and at low levels in roots and shoots.

Its function is as follows. Functions as a response regulator involved in His-to-Asp phosphorelay signal transduction system. Phosphorylation of the Asp residue in the receiver domain activates the ability of the protein to promote the transcription of target genes. Type-A response regulators seem to act as negative regulators of the cytokinin signaling. The polypeptide is Two-component response regulator ORR4 (Oryza sativa subsp. indica (Rice)).